The primary structure comprises 494 residues: Glutamate--tRNA ligase (494 aa).

Residues 9–19 carry the 'HIGH' region motif; it reads PSPTGPLHIGS. The short motif at 249–253 is the 'KMSKS' region element; the sequence is KLSKR. An ATP-binding site is contributed by lysine 252.

The protein belongs to the class-I aminoacyl-tRNA synthetase family. Glutamate--tRNA ligase type 1 subfamily. As to quaternary structure, monomer.

The protein localises to the cytoplasm. The enzyme catalyses tRNA(Glu) + L-glutamate + ATP = L-glutamyl-tRNA(Glu) + AMP + diphosphate. Catalyzes the attachment of glutamate to tRNA(Glu) in a two-step reaction: glutamate is first activated by ATP to form Glu-AMP and then transferred to the acceptor end of tRNA(Glu). This is Glutamate--tRNA ligase from Azobacteroides pseudotrichonymphae genomovar. CFP2.